Here is a 280-residue protein sequence, read N- to C-terminus: Pantothenate synthetase (280 aa).

Residue Met30–His37 coordinates ATP. His37 serves as the catalytic Proton donor. Gln61 lines the (R)-pantoate pocket. Residue Gln61 coordinates beta-alanine. Position 148-151 (Gly148–Asp151) interacts with ATP. A (R)-pantoate-binding site is contributed by Gln154. ATP-binding positions include Val177 and Leu185–Arg188.

It belongs to the pantothenate synthetase family. As to quaternary structure, homodimer.

The protein localises to the cytoplasm. The catalysed reaction is (R)-pantoate + beta-alanine + ATP = (R)-pantothenate + AMP + diphosphate + H(+). The protein operates within cofactor biosynthesis; (R)-pantothenate biosynthesis; (R)-pantothenate from (R)-pantoate and beta-alanine: step 1/1. Catalyzes the condensation of pantoate with beta-alanine in an ATP-dependent reaction via a pantoyl-adenylate intermediate. In Azobacteroides pseudotrichonymphae genomovar. CFP2, this protein is Pantothenate synthetase.